Here is a 362-residue protein sequence, read N- to C-terminus: tRNA-specific 2-thiouridylase MnmA (362 aa).

Residues 13 to 20 (GLSGGVDS) and Met39 contribute to the ATP site. An interaction with target base in tRNA region spans residues 99–101 (NPD). Cys104 serves as the catalytic Nucleophile. Residues Cys104 and Cys200 are joined by a disulfide bond. Gly128 serves as a coordination point for ATP. The segment at 150 to 152 (KDQ) is interaction with tRNA. Residue Cys200 is the Cysteine persulfide intermediate of the active site.

Belongs to the MnmA/TRMU family.

It is found in the cytoplasm. The catalysed reaction is S-sulfanyl-L-cysteinyl-[protein] + uridine(34) in tRNA + AH2 + ATP = 2-thiouridine(34) in tRNA + L-cysteinyl-[protein] + A + AMP + diphosphate + H(+). In terms of biological role, catalyzes the 2-thiolation of uridine at the wobble position (U34) of tRNA, leading to the formation of s(2)U34. The polypeptide is tRNA-specific 2-thiouridylase MnmA (Coxiella burnetii (strain RSA 493 / Nine Mile phase I)).